Reading from the N-terminus, the 334-residue chain is Cytosolic Fe-S cluster assembly factor NUBP1 homolog (334 aa).

Residues 1 to 24 are disordered; that stretch reads MSSAEVTAAAKPADAPEHCPGTAS. The [4Fe-4S] cluster site is built by Cys-19, Cys-33, Cys-36, and Cys-42. Residue 72–79 coordinates ATP; the sequence is GKGGVGKS. [4Fe-4S] cluster-binding residues include Cys-247 and Cys-250.

It belongs to the Mrp/NBP35 ATP-binding proteins family. NUBP1/NBP35 subfamily. As to quaternary structure, heterotetramer of 2 NUBP1 and 2 NUBP2 chains. It depends on [4Fe-4S] cluster as a cofactor.

Its subcellular location is the cytoplasm. Component of the cytosolic iron-sulfur (Fe/S) protein assembly (CIA) machinery. Required for maturation of extramitochondrial Fe-S proteins. The NUBP1-NUBP2 heterotetramer forms a Fe-S scaffold complex, mediating the de novo assembly of an Fe-S cluster and its transfer to target apoproteins. This Culex quinquefasciatus (Southern house mosquito) protein is Cytosolic Fe-S cluster assembly factor NUBP1 homolog.